A 605-amino-acid chain; its full sequence is Probable potassium transport system protein Kup (605 aa).

12 consecutive transmembrane segments (helical) span residues 17 to 37 (GLVFGDIGTSPIYTLTVIFAL), 45 to 65 (VFGILSMVVWTLIILVTVEYA), 96 to 116 (IAFVGFLSFVGVSLLLGDGVI), 140 to 160 (LGTLILIAALIAVVLFIFQFK), 165 to 185 (VAAAFGPLMVLWFGALTVSGL), 211 to 231 (GISAFFVLSEVILCATGGEAL), 246 to 266 (AWYFVFVALIINYLGQGAFAL), 286 to 306 (LYIPFLILTILATVIASQALI), 338 to 358 (IYIGSVNWFLMLLVIFIMLIF), 367 to 387 (AYGLAVTGTMTITGIMMTIIF), 394 to 414 (WKVPVAVAVTIVDVVFLISNL), and 417 to 437 (LPHGGYWSIILASVPFATILI).

Belongs to the HAK/KUP transporter (TC 2.A.72) family.

It localises to the cell inner membrane. The catalysed reaction is K(+)(in) + H(+)(in) = K(+)(out) + H(+)(out). Functionally, transport of potassium into the cell. Likely operates as a K(+):H(+) symporter. The chain is Probable potassium transport system protein Kup from Geotalea uraniireducens (strain Rf4) (Geobacter uraniireducens).